Consider the following 112-residue polypeptide: Ribosome-binding factor A (112 aa).

This sequence belongs to the RbfA family. As to quaternary structure, monomer. Binds 30S ribosomal subunits, but not 50S ribosomal subunits or 70S ribosomes.

The protein resides in the cytoplasm. Its function is as follows. One of several proteins that assist in the late maturation steps of the functional core of the 30S ribosomal subunit. Associates with free 30S ribosomal subunits (but not with 30S subunits that are part of 70S ribosomes or polysomes). Required for efficient processing of 16S rRNA. May interact with the 5'-terminal helix region of 16S rRNA. The polypeptide is Ribosome-binding factor A (Ruthia magnifica subsp. Calyptogena magnifica).